The primary structure comprises 905 residues: Respiratory burst oxidase homolog protein B (905 aa).

Disordered regions lie at residues 1 to 46 (MADL…KTAR) and 69 to 134 (EVRG…VRKR). At 1-355 (MADLEAGMVA…MYFLEENWKR (355 aa)) the chain is on the cytoplasmic side. The segment covering 29-44 (IPNSGNLGSSNRSTKT) has biased composition (polar residues). Over residues 75 to 84 (EGGSGHGTGF) the composition is skewed to gly residues. Residues 91–108 (SPSSKSGKLTSKLRQVTN) show a composition bias toward polar residues. EF-hand-like regions lie at residues 172 to 180 (QVDGVLLRS) and 206 to 217 (RGIVKQVLTKDE). EF-hand domains follow at residues 229-264 (GFDN…SASA) and 273-308 (RADE…SPSE). Ca(2+) is bound by residues D242, N244, D246, R248, and E253. The chain crosses the membrane as a helical span at residues 356 to 376 (SWVMTLWISICIALFIWKFIQ). At 377–440 (YRNRAVFGIM…FNDNINFHKV (64 aa)) the chain is on the extracellular side. The Ferric oxidoreductase domain occupies 395–551 (GAAETLKFNM…HLFVIVYTLL (157 aa)). A helical membrane pass occupies residues 441–461 (IAAGVAVGVALHAGAHLTCDF). Over 462–496 (PRLLHASDAQYELMKPFFGEKRPPNYWWFVKGTEG) the chain is Cytoplasmic. A helical membrane pass occupies residues 497–517 (WTGVVMVVLMAIAFTLAQPWF). The Extracellular portion of the chain corresponds to 518–539 (RRNKLKDSNPLKKMTGFNAFWF). The chain crosses the membrane as a helical span at residues 540 to 560 (THHLFVIVYTLLFVHGTCLYL). Residues 561–568 (SRKWYKKT) lie on the Cytoplasmic side of the membrane. The chain crosses the membrane as a helical span at residues 569–586 (TWMYLAVPVVLYVSERIL). In terms of domain architecture, FAD-binding FR-type spans 587–715 (RLFRSHDAVG…DGPYGAPAQD (129 aa)). Over 587–717 (RLFRSHDAVG…PYGAPAQDYR (131 aa)) the chain is Extracellular. A helical transmembrane segment spans residues 718–738 (EYDVLLLIGLGIGATPLISIV). Topologically, residues 739–905 (KDVLNHIQGE…TRFDFHKENF (167 aa)) are cytoplasmic.

This sequence belongs to the RBOH (TC 5.B.1.3) family. In terms of assembly, monomer and homodimer, stabilized by swapping the EF-hand motifs. Interacts with GTP-bound RAC1.

It is found in the membrane. In terms of biological role, calcium-dependent NADPH oxidase that generates superoxide. The polypeptide is Respiratory burst oxidase homolog protein B (RBOHB) (Oryza sativa subsp. japonica (Rice)).